Reading from the N-terminus, the 378-residue chain is Chaperone protein DnaJ (378 aa).

In terms of domain architecture, J spans 5–69 (EYYDRLGVSK…QKRAAYDQYG (65 aa)). A CR-type zinc finger spans residues 134 to 216 (GVEKEVSYNR…CHGTGHEKQA (83 aa)). Residues C147, C150, C164, C167, C190, C193, C204, and C207 each coordinate Zn(2+). 4 CXXCXGXG motif repeats span residues 147–154 (CGTCLGSG), 164–171 (CRKCHGSG), 190–197 (CDICHGSG), and 204–211 (CQTCHGTG).

Belongs to the DnaJ family. As to quaternary structure, homodimer. It depends on Zn(2+) as a cofactor.

It localises to the cytoplasm. In terms of biological role, participates actively in the response to hyperosmotic and heat shock by preventing the aggregation of stress-denatured proteins and by disaggregating proteins, also in an autonomous, DnaK-independent fashion. Unfolded proteins bind initially to DnaJ; upon interaction with the DnaJ-bound protein, DnaK hydrolyzes its bound ATP, resulting in the formation of a stable complex. GrpE releases ADP from DnaK; ATP binding to DnaK triggers the release of the substrate protein, thus completing the reaction cycle. Several rounds of ATP-dependent interactions between DnaJ, DnaK and GrpE are required for fully efficient folding. Also involved, together with DnaK and GrpE, in the DNA replication of plasmids through activation of initiation proteins. This Streptococcus pyogenes protein is Chaperone protein DnaJ.